A 479-amino-acid polypeptide reads, in one-letter code: Neuronal acetylcholine receptor subunit alpha-9 (479 aa).

Residues 1–22 (MNWSHSCISFCWIYFAASRLRA) form the signal peptide. At 23-238 (AETADGKYAQ…FTLLLKRRSS (216 aa)) the chain is on the extracellular side. Asparagine 57 is a glycosylation site (N-linked (GlcNAc...) asparagine). Residues cysteine 155 and cysteine 169 are joined by a disulfide bond. Asparagine 170 is a glycosylation site (N-linked (GlcNAc...) asparagine). The Na(+) site is built by serine 191 and aspartate 193. Cysteines 219 and 220 form a disulfide. The next 3 helical transmembrane spans lie at 239 to 259 (FYIVNLLIPCVLISFLAPLSF), 269 to 289 (VSLGVTILLAMTVFQLMVAEI), and 303 to 323 (YIATMALITASTALTIMVMNI). The Cytoplasmic segment spans residues 324-457 (HFCGAEARPV…WKKVAKVIDR (134 aa)). The chain crosses the membrane as a helical span at residues 458–478 (FFMWIFFIMVFVMTILIIARA).

This sequence belongs to the ligand-gated ion channel (TC 1.A.9) family. Acetylcholine receptor (TC 1.A.9.1) subfamily. Alpha-9/CHRNA9 sub-subfamily. In terms of assembly, forms homo- or heteropentameric channels in conjunction with CHRNA10. The native outer hair cell receptor is composed of CHRNA9:CHRNA10 heterooligomers. Found in the stoichiometric form (CHRNA9)2:(CHRNA10)3. Post-translationally, N-glycosylated. As to expression, expressed in cochlea, keratinocytes, pituitary gland, B-cells and T-cells.

The protein localises to the synaptic cell membrane. The protein resides in the cell membrane. It carries out the reaction Ca(2+)(in) = Ca(2+)(out). It catalyses the reaction K(+)(in) = K(+)(out). The enzyme catalyses Na(+)(in) = Na(+)(out). The catalysed reaction is Mg(2+)(in) = Mg(2+)(out). Activated by a myriad of ligands such as acetylcholine. AChR activity is inhibited by the antagonist alpha-conotoxins RgIA and GeXXA, small disulfide-constrained peptides from cone snails. In terms of biological role, component of neuronal acetylcholine receptors (nAChRs) that function as pentameric, ligand-gated cation channels with high calcium permeability among other activities. nAChRs are excitatory neurotrasnmitter receptors formed by a collection of nAChR subunits known to mediate synaptic transmission in the nervous system and the neuromuscular junction. Each nAchR subunit confers differential attributes to channel properties, including activation, deactivation and desensitization kinetics, pH sensitivity, cation permeability, and binding to allosteric modulators. Forms either homopentamers or heteropentamers with CHRNA10. Expressed in the inner ear, in sympathetic neurons and in other non-neuronal cells, such as skin keratinocytes and lymphocytes. nAChR formed by CHRNA9:CHRNA10 mediate central nervous system control of auditory and vestibular sensory processing. The channel is permeable to a range of divalent cations including calcium, the influx of which may activate a potassium current which hyperpolarizes the cell membrane. In the ear, mediates synaptic transmission between efferent olivocochlear fibers and hair cells of the cochlea, this may lead to a reduction in basilar membrane motion, altering the activity of auditory nerve fibers and reducing the range of dynamic hearing. This may protect against acoustic trauma. May also regulate keratinocyte adhesion. This Homo sapiens (Human) protein is Neuronal acetylcholine receptor subunit alpha-9.